The sequence spans 197 residues: 3-isopropylmalate dehydratase small subunit (197 aa).

It belongs to the LeuD family. LeuD type 1 subfamily. As to quaternary structure, heterodimer of LeuC and LeuD.

It carries out the reaction (2R,3S)-3-isopropylmalate = (2S)-2-isopropylmalate. Its pathway is amino-acid biosynthesis; L-leucine biosynthesis; L-leucine from 3-methyl-2-oxobutanoate: step 2/4. Functionally, catalyzes the isomerization between 2-isopropylmalate and 3-isopropylmalate, via the formation of 2-isopropylmaleate. This is 3-isopropylmalate dehydratase small subunit from Streptomyces avermitilis (strain ATCC 31267 / DSM 46492 / JCM 5070 / NBRC 14893 / NCIMB 12804 / NRRL 8165 / MA-4680).